The following is a 951-amino-acid chain: Valine--tRNA ligase (951 aa).

The short motif at 42–52 (PNVTGSLHMGH) is the 'HIGH' region element. The 'KMSKS' region signature appears at 554–558 (KMSKS). Residue lysine 557 participates in ATP binding. Residues 880–944 (AGLINKEDEL…AEAKAKLIEQ (65 aa)) are a coiled coil.

The protein belongs to the class-I aminoacyl-tRNA synthetase family. ValS type 1 subfamily. In terms of assembly, monomer.

The protein localises to the cytoplasm. The catalysed reaction is tRNA(Val) + L-valine + ATP = L-valyl-tRNA(Val) + AMP + diphosphate. Its function is as follows. Catalyzes the attachment of valine to tRNA(Val). As ValRS can inadvertently accommodate and process structurally similar amino acids such as threonine, to avoid such errors, it has a 'posttransfer' editing activity that hydrolyzes mischarged Thr-tRNA(Val) in a tRNA-dependent manner. This Shigella boydii serotype 4 (strain Sb227) protein is Valine--tRNA ligase.